The sequence spans 164 residues: Ubiquitin-conjugating enzyme E2 2 (164 aa).

One can recognise a UBC core domain in the interval 4–150; that stretch reads PARRRLMRDF…VKETVEKSWE (147 aa). Cys88 serves as the catalytic Glycyl thioester intermediate.

This sequence belongs to the ubiquitin-conjugating enzyme family.

The protein resides in the cytoplasm. Its subcellular location is the nucleus. The enzyme catalyses S-ubiquitinyl-[E1 ubiquitin-activating enzyme]-L-cysteine + [E2 ubiquitin-conjugating enzyme]-L-cysteine = [E1 ubiquitin-activating enzyme]-L-cysteine + S-ubiquitinyl-[E2 ubiquitin-conjugating enzyme]-L-cysteine.. It participates in protein modification; protein ubiquitination. Its function is as follows. Catalyzes the covalent attachment of ubiquitin to other proteins. Plays a role in transcription regulation by catalyzing the monoubiquitination of histone H2B to form H2BK123ub1. H2BK123ub1 gives a specific tag for epigenetic transcriptional activation and is also a prerequisite for H3K4me and H3K79me formation. Also involved in postreplication repair of UV-damaged DNA, in N-end rule-dependent protein degradation and in sporulation. The polypeptide is Ubiquitin-conjugating enzyme E2 2 (UBC2) (Kluyveromyces lactis (strain ATCC 8585 / CBS 2359 / DSM 70799 / NBRC 1267 / NRRL Y-1140 / WM37) (Yeast)).